A 245-amino-acid chain; its full sequence is MKFDILTLFPAMFEGPLTESIIRRAVEKGLLDIRLHQIRDFATDRHKVVDDAPYGGGDGMVMKVEPIAACLEAVKAERPKARVLLTSPRGRLFDNAAARELAQEQEVIIICGRYEGIDERVRELFVEDEFSIGDFVLTGGELAAMVMIDATVRFVPGVLGSPGSAETDTFSDGLLEYPHYTRPAEFRGHSVPAVLLSGNHAEVARWRRRKALEETIRSRPDLLEKAVLDSDDRRYLLELEEGASK.

S-adenosyl-L-methionine-binding positions include glycine 112 and 132–137 (IGDFVL).

This sequence belongs to the RNA methyltransferase TrmD family. In terms of assembly, homodimer.

It localises to the cytoplasm. It catalyses the reaction guanosine(37) in tRNA + S-adenosyl-L-methionine = N(1)-methylguanosine(37) in tRNA + S-adenosyl-L-homocysteine + H(+). Specifically methylates guanosine-37 in various tRNAs. This is tRNA (guanine-N(1)-)-methyltransferase from Geobacter metallireducens (strain ATCC 53774 / DSM 7210 / GS-15).